The primary structure comprises 531 residues: Methyl-accepting chemotaxis protein McpN (531 aa).

Over M1–Q24 the chain is Cytoplasmic. Residues F25 to L45 form a helical membrane-spanning segment. The Periplasmic segment spans residues S46–Q174. The tract at residues E52–A140 is pilJ-type. The N-box motif lies at I54 to Q65. A nitrate-binding site is contributed by R61. The helical transmembrane segment at H175 to G195 threads the bilayer. At R196–T531 the chain is on the cytoplasmic side. The region spanning A201–A254 is the HAMP domain. The region spanning S259–S495 is the Methyl-accepting transducer domain.

Belongs to the methyl-accepting chemotaxis (MCP) protein family. In terms of assembly, ligand free ligand-binding domain (LBD) is present in a monomer-dimer equilibrium. Nitrate binding to the periplasmic LBD stabilizes the homodimer.

It is found in the cell inner membrane. Chemotactic-signal transducers respond to changes in the concentration of attractants and repellents in the environment, transduce a signal from the outside to the inside of the cell, and facilitate sensory adaptation through the variation of the level of methylation. McpN is a chemoreceptor that recognizes specifically nitrate and mediates chemoattraction. Binds nitrate specifically and shows no affinity for other ligands such as nitrite. McpN-mediated taxis occurs only under nitrate starvation conditions. The protein is Methyl-accepting chemotaxis protein McpN of Pseudomonas aeruginosa (strain ATCC 15692 / DSM 22644 / CIP 104116 / JCM 14847 / LMG 12228 / 1C / PRS 101 / PAO1).